Consider the following 511-residue polypeptide: MKCFLYLAFLFIGVNCKFTIVFPHNQKGNWKNVPSNYHYCPSSSDLNWHNDLIGTGLQVKMPKSHKAIQADGWMCHASKWVTTCDFRWYGPKYITHSIRSFTPSVEQCKESIEQTKQGTWLNPGFPPQSCGYATVTDAEAVIVQVTPHHVLVDEYTGEWVDSQFINGKCSNDICPTVHNSTTWHSDYKVKGLCDSNLISTDITFFSEDRELSSLGKEGTGFRSNYFAYETGDKACKMQYCKHWGVRLPSGVWFEMADKDLFAAARFPECPEGSSISAPSQTSVDVSLIQDVERILDYSLCQETWSKIRAGLPISPVDLSYLAPKNPGTGPAFTIINGTLKYFETRYIRVDIAAPILSRMVGMISGTTTERELWDDWAPYEDVEIGPNGVLRTSSGYKFPLYMIGHGMLDSGLHLSSKAQVFEHPHIQDAASQLPDDEILFFGDTGLSKNPIDFVEGWFSSWKSSIASFFFIIGLIIGLFLVLRVGIYLYIKLKHTKKRQIYTDIEMNRLGR.

An N-terminal signal peptide occupies residues 1 to 16 (MKCFLYLAFLFIGVNC). Residues 17–467 (KFTIVFPHNQ…FSSWKSSIAS (451 aa)) are Virion surface-facing. 6 disulfides stabilise this stretch: Cys40–Cys300, Cys75–Cys108, Cys84–Cys130, Cys169–Cys174, Cys193–Cys240, and Cys235–Cys269. Residues 53–172 (IGTGLQVKMP…QFINGKCSND (120 aa)) form a fusion peptide region. An N-linked (GlcNAc...) asparagine; by host glycan is attached at Asn179. The tract at residues 259-309 (DLFAAARFPECPEGSSISAPSQTSVDVSLIQDVERILDYSLCQETWSKIRA) is trimerization. A glycan (N-linked (GlcNAc...) asparagine; by host) is linked at Asn336. A trimerization region spans residues 383-405 (EIGPNGVLRTSSGYKFPLYMIGH). Residues 468–488 (FFFIIGLIIGLFLVLRVGIYL) traverse the membrane as a helical segment. Over 489–511 (YIKLKHTKKRQIYTDIEMNRLGR) the chain is Intravirion. A basolateral targeting ex vivo motif is present at residues 496–506 (KKRQIYTDIEM).

Belongs to the vesiculovirus glycoprotein family. As to quaternary structure, homotrimer. Interacts with host LDL at target cell surface. In terms of processing, glycosylated by host. Palmitoylated by host.

The protein resides in the virion membrane. It localises to the host membrane. Its function is as follows. Attaches the virus to host LDL receptors, inducing clathrin-dependent endocytosis of the virion. In the endosome, the acidic pH induces conformational changes in the glycoprotein trimer, which trigger fusion between virus and endosomal membrane. This is Glycoprotein (G) from Aedes (Bovine).